A 24-amino-acid polypeptide reads, in one-letter code: Humanin-like 13 (24 aa).

It belongs to the humanin family.

The protein resides in the secreted. Its subcellular location is the cytoplasm. Functionally, plays a role as a neuroprotective and antiapoptotic factor. This chain is Humanin-like 13, found in Homo sapiens (Human).